The sequence spans 248 residues: Exosome complex component Rrp41 (248 aa).

It belongs to the RNase PH family. Rrp41 subfamily. In terms of assembly, component of the archaeal exosome complex. Forms a hexameric ring-like arrangement composed of 3 Rrp41-Rrp42 heterodimers. The hexameric ring associates with a trimer of Rrp4 and/or Csl4 subunits.

The protein localises to the cytoplasm. Catalytic component of the exosome, which is a complex involved in RNA degradation. Has 3'-&gt;5' exoribonuclease activity. Can also synthesize heteromeric RNA-tails. The chain is Exosome complex component Rrp41 from Thermoplasma volcanium (strain ATCC 51530 / DSM 4299 / JCM 9571 / NBRC 15438 / GSS1).